A 312-amino-acid polypeptide reads, in one-letter code: MRLVFAGTPETALPALHQLIDSPRHDVIAVLTRPDAASGRRGKPEPSPVARAALERDIPVLRPSRPNSAEFVAELSELAPQCCAVVAYGALLGDALLGVPPQGWVNLHFSLLPAWRGAAPVQAAIAAGDAVTGATTFQIEPSLDSGPVYGVVTETIRPTDTAGDLLGRLAVSGAELLSATLDGIAEGALTARPQPADGVTLAPKISVEQARVRWELPAPIIERRIRAVTPNPGAWTLIGDLRVKLGPVYLDAAVKPPGPLPPGAIQVDRKHVWVGTGSEPLRLGQVQPPGKKLMNAADWARGARLDPSVRAS.

110 to 113 (SLLP) is a (6S)-5,6,7,8-tetrahydrofolate binding site.

This sequence belongs to the Fmt family.

The catalysed reaction is L-methionyl-tRNA(fMet) + (6R)-10-formyltetrahydrofolate = N-formyl-L-methionyl-tRNA(fMet) + (6S)-5,6,7,8-tetrahydrofolate + H(+). Attaches a formyl group to the free amino group of methionyl-tRNA(fMet). The formyl group appears to play a dual role in the initiator identity of N-formylmethionyl-tRNA by promoting its recognition by IF2 and preventing the misappropriation of this tRNA by the elongation apparatus. This chain is Methionyl-tRNA formyltransferase, found in Mycobacterium marinum (strain ATCC BAA-535 / M).